The following is a 175-amino-acid chain: Lactobacillus up-regulated protein (175 aa).

The first 18 residues, 1–18, serve as a signal peptide directing secretion; sequence MRSIFLAVLGLMATSSLA. Asparagine 59 carries N-linked (GlcNAc...) asparagine glycosylation.

The chain is Lactobacillus up-regulated protein (lbuA) from Emericella nidulans (strain FGSC A4 / ATCC 38163 / CBS 112.46 / NRRL 194 / M139) (Aspergillus nidulans).